The following is a 119-amino-acid chain: Ig heavy chain V region X44 (119 aa).

The Ig-like domain occupies 1–117 (EVKLLESGGG…WGQGTLVTVS (117 aa)).

This is Ig heavy chain V region X44 from Mus musculus (Mouse).